Reading from the N-terminus, the 113-residue chain is Inner membrane protein YiaB (113 aa).

Over 1-9 the chain is Cytoplasmic; sequence MKTSKTVAK. The helical transmembrane segment at 10–20 threads the bilayer; the sequence is LLFVVGALVYL. Residues 21 to 33 are Periplasmic-facing; it reads VGLWISCPLLSGK. Residues 34-51 traverse the membrane as a helical segment; sequence GYFLGVLMTATFGNYAYL. Topologically, residues 52–61 are cytoplasmic; it reads RAEKLGQLDD. A helical transmembrane segment spans residues 62-82; it reads FFTHICQLVALITIGLLFIGV. Topologically, residues 83–84 are periplasmic; sequence LN. The chain crosses the membrane as a helical span at residues 85-105; sequence APINTYEMVIYPIAFFVCLFG. Residues 106–113 lie on the Cytoplasmic side of the membrane; the sequence is QMRLFRSA.

Its subcellular location is the cell inner membrane. The protein is Inner membrane protein YiaB (yiaB) of Escherichia coli (strain K12).